The primary structure comprises 166 residues: uncharacterized protein (166 aa).

2 stretches are compositionally biased toward gly residues: residues 1–10 (MNYGNNGGGQ) and 76–86 (YRGGGGGGGGN). Positions 1–117 (MNYGNNGGGQ…GGGNKNFGPI (117 aa)) are disordered.

This is an uncharacterized protein from Caenorhabditis elegans.